The primary structure comprises 130 residues: Transcription antitermination protein NusB (130 aa).

Belongs to the NusB family.

Involved in transcription antitermination. Required for transcription of ribosomal RNA (rRNA) genes. Binds specifically to the boxA antiterminator sequence of the ribosomal RNA (rrn) operons. This chain is Transcription antitermination protein NusB, found in Sulfurovum sp. (strain NBC37-1).